The primary structure comprises 84 residues: Tetrahydromethanopterin S-methyltransferase subunit G (84 aa).

A helical transmembrane segment spans residues 50-70 (IGILYGLVIGIILSYILPALI).

This sequence belongs to the MtrG family. As to quaternary structure, the complex is composed of 8 subunits; MtrA, MtrB, MtrC, MtrD, MtrE, MtrF, MtrG and MtrH.

Its subcellular location is the cell membrane. The catalysed reaction is 5-methyl-5,6,7,8-tetrahydromethanopterin + coenzyme M + 2 Na(+)(in) = 5,6,7,8-tetrahydromethanopterin + methyl-coenzyme M + 2 Na(+)(out). It functions in the pathway one-carbon metabolism; methanogenesis from CO(2); methyl-coenzyme M from 5,10-methylene-5,6,7,8-tetrahydromethanopterin: step 2/2. Part of a complex that catalyzes the formation of methyl-coenzyme M and tetrahydromethanopterin from coenzyme M and methyl-tetrahydromethanopterin. This is an energy-conserving, sodium-ion translocating step. The protein is Tetrahydromethanopterin S-methyltransferase subunit G of Methanocaldococcus jannaschii (strain ATCC 43067 / DSM 2661 / JAL-1 / JCM 10045 / NBRC 100440) (Methanococcus jannaschii).